The following is a 360-amino-acid chain: Arginase, non-hepatic 2 (360 aa).

Residues H122, D145, H147, and D149 each contribute to the Mn(2+) site. Substrate-binding positions include 147 to 151, 158 to 160, and D204; these read HADIN and SGN. The Mn(2+) site is built by D253 and D255. The substrate site is built by T267 and E298.

The protein belongs to the arginase family. As to quaternary structure, homotrimer. Mn(2+) is required as a cofactor. As to expression, expressed at differing tadpole stages in tail, intestine, hindlimb and trunk region. Strongest in tadpole tail.

It carries out the reaction L-arginine + H2O = urea + L-ornithine. It functions in the pathway nitrogen metabolism; urea cycle; L-ornithine and urea from L-arginine: step 1/1. As well as its role in the urea cycle, may be involved in tissue remodeling. The chain is Arginase, non-hepatic 2 (arg2-b) from Xenopus laevis (African clawed frog).